The chain runs to 190 residues: Histone-arginine methyltransferase METTL23 (190 aa).

Belongs to the methyltransferase superfamily. METTL23 family. As to quaternary structure, interacts with HSPA5, HSP90B1, TUBULIN, UGGT1 and UGGT2. Interacts with TET3. Interacts with STPG4.

It is found in the nucleus. Its subcellular location is the cytoplasm. It carries out the reaction L-arginyl-[protein] + 2 S-adenosyl-L-methionine = N(omega),N(omega)-dimethyl-L-arginyl-[protein] + 2 S-adenosyl-L-homocysteine + 2 H(+). Its function is as follows. Histone methyltransferase that dimethylates histone H3 at 'Arg-17', forming asymmetric dimethylarginine (H3R17me2a), leading to activate transcription via chromatin remodeling. Maternal factor involved in epigenetic chromatin reprogramming of the paternal genome in the zygote: mediates H3R17me2a, promoting histone H3.3 incorporation in the male pronucleus, leading to TET3 recruitment and subsequent DNA demethylation. The protein is Histone-arginine methyltransferase METTL23 of Homo sapiens (Human).